The chain runs to 559 residues: D-2-hydroxyglutarate dehydrogenase, mitochondrial (559 aa).

A mitochondrion-targeting transit peptide spans 1–78; it reads MMMQKLRRSG…GMLLQQYKCF (78 aa). The region spanning 130-309 is the FAD-binding PCMH-type domain; it reads YKGSSKLMLL…TKVSILTQPK (180 aa).

It belongs to the FAD-binding oxidoreductase/transferase type 4 family. Homodimer. FAD is required as a cofactor.

Its subcellular location is the mitochondrion. The enzyme catalyses (R)-2-hydroxyglutarate + A = 2-oxoglutarate + AH2. Its function is as follows. Catalyzes the oxidation of (R)-2-hydroxyglutarate to 2-oxoglutarate. May be involved in the catabolism of propionyl-CoA derived from beta-oxidation. Involved in degradation of lysine for the supply of carbon and electrons to the ETF/ETFQO complex during dark-induced sugar starvation. The polypeptide is D-2-hydroxyglutarate dehydrogenase, mitochondrial (D2HGDH) (Arabidopsis thaliana (Mouse-ear cress)).